The sequence spans 333 residues: Trimethylamine N-oxide-binding protein (333 aa).

Residues 1–42 form the signal peptide; sequence MRLFREIAANDPGPTGRMKNMKTFTTALATGVLALCPLAALA. W55, W102, E131, W177, and W222 together coordinate trimethylamine N-oxide. P249, V251, N254, A257, and D260 together coordinate Ca(2+).

As to quaternary structure, the complex is probably composed of two ATP-binding proteins (TmoW), two transmembrane proteins (TmoV) and a solute-binding protein (TmoX). Monomer in solution, but forms homodimers in crystals.

It localises to the periplasm. Binds a Ca(2+) ion, which has little effect on either the binding affinity or the secondary structure, but plays an important role in maintaining the stability of TmoX. It may modulate the protein stability in response to biological needs and environmental changes. Thermostability is dramatically decreased when Ca(2+) is removed by EDTA. Part of the ABC transporter complex TmoXWV involved in trimethylamine N-oxide (TMAO) import. Is specific for TMAO and essential for TMAO metabolism. Binds TMAO with high affinity. In vitro, also presents a high binding affinity for choline, however this transporter seems specific for TMAO and the choline-binding affinity presented by recombinant TmoX may not make physiological sense. The sequence is that of Trimethylamine N-oxide-binding protein from Ruegeria pomeroyi (strain ATCC 700808 / DSM 15171 / DSS-3) (Silicibacter pomeroyi).